A 39-amino-acid chain; its full sequence is LIM/homeobox protein xLIM-2B (39 aa).

The homeobox DNA-binding region spans 1 to 39 (KAKQLETLKAAFAATPKPTRHIREQLAQETGLNMRVIQV).

It is found in the nucleus. The polypeptide is LIM/homeobox protein xLIM-2B (lim2b) (Xenopus laevis (African clawed frog)).